Reading from the N-terminus, the 276-residue chain is Shikimate dehydrogenase (NADP(+)) (276 aa).

Residues 18–20 (SRS) and Thr-65 contribute to the shikimate site. Lys-69 acts as the Proton acceptor in catalysis. Shikimate is bound by residues Asn-90 and Asp-106. Residues 132–136 (GAGGA) and Ile-221 contribute to the NADP(+) site. Tyr-223 provides a ligand contact to shikimate. Position 244 (Gly-244) interacts with NADP(+).

This sequence belongs to the shikimate dehydrogenase family. Homodimer.

It catalyses the reaction shikimate + NADP(+) = 3-dehydroshikimate + NADPH + H(+). It participates in metabolic intermediate biosynthesis; chorismate biosynthesis; chorismate from D-erythrose 4-phosphate and phosphoenolpyruvate: step 4/7. In terms of biological role, involved in the biosynthesis of the chorismate, which leads to the biosynthesis of aromatic amino acids. Catalyzes the reversible NADPH linked reduction of 3-dehydroshikimate (DHSA) to yield shikimate (SA). This is Shikimate dehydrogenase (NADP(+)) from Paramagnetospirillum magneticum (strain ATCC 700264 / AMB-1) (Magnetospirillum magneticum).